An 881-amino-acid polypeptide reads, in one-letter code: Envelope glycoprotein gp160 (881 aa).

A signal peptide spans 1–19; it reads MGCLGNQLLIAILLLSVYG. The Extracellular segment spans residues 20 to 696; it reads IYCTQYVTVF…ASWIKYIQYG (677 aa). Asn37 is a glycosylation site (N-linked (GlcNAc...) asparagine; by host). Cys44 and Cys57 are disulfide-bonded. N-linked (GlcNAc...) asparagine; by host glycans are attached at residues Asn70, Asn114, Asn148, Asn158, Asn186, Asn200, Asn204, Asn214, Asn246, Asn249, Asn280, Asn286, Asn297, Asn308, Asn318, Asn373, and Asn379. Cystine bridges form between Cys101–Cys222, Cys108–Cys213, Cys113–Cys170, Cys235–Cys265, and Cys245–Cys257. The segment at 113 to 169 is V1; sequence CNKSETDRWGLTKSSTTITTAAPTSAPVSEKIDMVNETSSCIAQNNCTGLEQEQMIS. The V2 stretch occupies residues 170-213; the sequence is CKFTMTGLKRDKTKEYNETWYSTDLVCEQGNSTDNESRCYMNHC. The tract at residues 313–345 is V3; the sequence is CRRPGNKTVLPVTIMSGLVFHSQPLTDRPKQAW. A disulfide bond links Cys313 and Cys346. 2 disulfide bridges follow: Cys397–Cys461 and Cys404–Cys434. A V4 region spans residues 404–434; it reads CKMNWFLNWVEDRDVTTQRPKERHRRNYVPC. Residues Asn462 and Asn478 are each glycosylated (N-linked (GlcNAc...) asparagine; by host). Residues 477–484 are V5; that stretch reads GNQTSITM. The fusion peptide stretch occupies residues 528–548; it reads GVFVLGFLGFLATAGSAMGAA. Positions 591-607 are immunosuppression; it reads LQTRVTAIEKYLEDQAQ. N-linked (GlcNAc...) asparagine; by host glycans are attached at residues Asn627, Asn636, and Asn652. The stretch at 636–668 forms a coiled coil; the sequence is NDTWQEWERKVDFLEENITALLEEAQIQQEKNM. The segment at 673-694 is MPER; binding to GalCer; sequence KLNSWDVFGNWFDLASWIKYIQ. Residues 697 to 717 traverse the membrane as a helical segment; that stretch reads IYVVVGVILLRIVIYIVQMLA. Over 718-881 the chain is Cytoplasmic; it reads KLRQGYRPVF…IRQGLELTLL (164 aa). Residues 723–726 carry the YXXV motif; contains endocytosis signal motif; sequence YRPV. The interval 737–761 is disordered; that stretch reads THTQQDPALPTREGKEGDGGEGGGN. A lipid anchor (S-palmitoyl cysteine; by host) is attached at Cys789. The short motif at 880-881 is the Di-leucine internalization motif element; the sequence is LL.

In terms of assembly, the mature envelope protein (Env) consists of a homotrimer of non-covalently associated gp120-gp41 heterodimers. The resulting complex protrudes from the virus surface as a spike. Interacts with host CD4 and CCR5. Gp120 also interacts with the C-type lectins CD209/DC-SIGN and CLEC4M/DC-SIGNR (collectively referred to as DC-SIGN(R)). The mature envelope protein (Env) consists of a homotrimer of non-covalently associated gp120-gp41 heterodimers. The resulting complex protrudes from the virus surface as a spike. Specific enzymatic cleavages in vivo yield mature proteins. Envelope glycoproteins are synthesized as an inactive precursor that is heavily N-glycosylated and processed likely by host cell furin in the Golgi to yield the mature SU and TM proteins. The cleavage site between SU and TM requires the minimal sequence [KR]-X-[KR]-R. In terms of processing, palmitoylation of the transmembrane protein and of Env polyprotein (prior to its proteolytic cleavage) is essential for their association with host cell membrane lipid rafts. Palmitoylation is therefore required for envelope trafficking to classical lipid rafts, but not for viral replication.

It localises to the virion membrane. Its subcellular location is the host cell membrane. The protein localises to the host endosome membrane. In terms of biological role, the surface protein gp120 (SU) attaches the virus to the host lymphoid cell by binding to the primary receptor CD4. This interaction induces a structural rearrangement creating a high affinity binding site for a chemokine coreceptor like CCR5. This peculiar 2 stage receptor-interaction strategy allows gp120 to maintain the highly conserved coreceptor-binding site in a cryptic conformation, protected from neutralizing antibodies. These changes are transmitted to the transmembrane protein gp41 and are thought to activate its fusogenic potential by unmasking its fusion peptide. Its function is as follows. Surface protein gp120 (SU) may target the virus to gut-associated lymphoid tissue (GALT) by binding host ITGA4/ITGB7 (alpha-4/beta-7 integrins), a complex that mediates T-cell migration to the GALT. Interaction between gp120 and ITGA4/ITGB7 would allow the virus to enter GALT early in the infection, infecting and killing most of GALT's resting CD4+ T-cells. This T-cell depletion is believed to be the major insult to the host immune system leading to AIDS. The surface protein gp120 is a ligand for CD209/DC-SIGN and CLEC4M/DC-SIGNR, which are respectively found on dendritic cells (DCs), and on endothelial cells of liver sinusoids and lymph node sinuses. These interactions allow capture of viral particles at mucosal surfaces by these cells and subsequent transmission to permissive cells. DCs are professional antigen presenting cells, critical for host immunity by inducing specific immune responses against a broad variety of pathogens. They act as sentinels in various tissues where they take up antigen, process it, and present it to T-cells following migration to lymphoid organs. SIV subverts the migration properties of dendritic cells to gain access to CD4+ T-cells in lymph nodes. Virus transmission to permissive T-cells occurs either in trans (without DCs infection, through viral capture and transmission), or in cis (following DCs productive infection, through the usual CD4-gp120 interaction), thereby inducing a robust infection. In trans infection, bound virions remain infectious over days and it is proposed that they are not degraded, but protected in non-lysosomal acidic organelles within the DCs close to the cell membrane thus contributing to the viral infectious potential during DCs' migration from the periphery to the lymphoid tissues. On arrival at lymphoid tissues, intact virions recycle back to DCs' cell surface allowing virus transmission to CD4+ T-cells. Virion capture also seems to lead to MHC-II-restricted viral antigen presentation, and probably to the activation of SIV-specific CD4+ cells. Functionally, the transmembrane protein gp41 (TM) acts as a class I viral fusion protein. Under the current model, the protein has at least 3 conformational states: pre-fusion native state, pre-hairpin intermediate state, and post-fusion hairpin state. During fusion of viral and target intracellular membranes, the coiled coil regions (heptad repeats) assume a trimer-of-hairpins structure, positioning the fusion peptide in close proximity to the C-terminal region of the ectodomain. The formation of this structure appears to drive apposition and subsequent fusion of viral and target cell membranes. Complete fusion occurs in host cell endosomes. The virus undergoes clathrin-dependent internalization long before endosomal fusion, thus minimizing the surface exposure of conserved viral epitopes during fusion and reducing the efficacy of inhibitors targeting these epitopes. Membranes fusion leads to delivery of the nucleocapsid into the cytoplasm. In terms of biological role, the envelope glycoprotein gp160 precursor down-modulates cell surface CD4 antigen by interacting with it in the endoplasmic reticulum and blocking its transport to the cell surface. Its function is as follows. The gp120-gp41 heterodimer allows rapid transcytosis of the virus through CD4 negative cells such as simple epithelial monolayers of the intestinal, rectal and endocervical epithelial barriers. Both gp120 and gp41 specifically recognize glycosphingolipids galactosyl-ceramide (GalCer) or 3' sulfo-galactosyl-ceramide (GalS) present in the lipid rafts structures of epithelial cells. Binding to these alternative receptors allows the rapid transcytosis of the virus through the epithelial cells. This transcytotic vesicle-mediated transport of virions from the apical side to the basolateral side of the epithelial cells does not involve infection of the cells themselves. This Simian immunodeficiency virus (isolate K6W) (SIV-mac) protein is Envelope glycoprotein gp160 (env).